Consider the following 795-residue polypeptide: Phenylalanine--tRNA ligase beta subunit (795 aa).

The tRNA-binding domain occupies 39–148; sequence AGAFHGVVVG…ADAPLGTDIR (110 aa). Positions 401-476 constitute a B5 domain; it reads PARATIALRR…RVYGYNNIPN (76 aa). Mg(2+) contacts are provided by Asp-454, Asp-460, Glu-463, and Glu-464. Residues 701-794 form the FDX-ACB domain; sequence SRFPANRRDI…LKQRFQASLR (94 aa).

The protein belongs to the phenylalanyl-tRNA synthetase beta subunit family. Type 1 subfamily. In terms of assembly, tetramer of two alpha and two beta subunits. The cofactor is Mg(2+).

The protein localises to the cytoplasm. It carries out the reaction tRNA(Phe) + L-phenylalanine + ATP = L-phenylalanyl-tRNA(Phe) + AMP + diphosphate + H(+). The sequence is that of Phenylalanine--tRNA ligase beta subunit (pheT) from Dickeya dadantii (strain 3937) (Erwinia chrysanthemi (strain 3937)).